We begin with the raw amino-acid sequence, 399 residues long: Arylacetamide deacetylase (399 aa).

The Cytoplasmic portion of the chain corresponds to methionine 1 to lysine 4. A helical; Signal-anchor for type II membrane protein transmembrane segment spans residues tyrosine 5–aspartate 25. The Lumenal segment spans residues asparagine 26 to leucine 399. Positions histidine 111–glycine 113 match the Involved in the stabilization of the negatively charged intermediate by the formation of the oxyanion hole motif. An intrachain disulfide couples cysteine 116 to cysteine 340. Serine 189 is a catalytic residue. Asparagine 282 carries an N-linked (GlcNAc...) asparagine glycan. Catalysis depends on residues aspartate 343 and histidine 373.

It belongs to the 'GDXG' lipolytic enzyme family.

The protein localises to the endoplasmic reticulum membrane. It localises to the microsome membrane. The catalysed reaction is a triacylglycerol + H2O = a diacylglycerol + a fatty acid + H(+). In terms of biological role, displays cellular triglyceride lipase activity in liver, increases the levels of intracellular fatty acids derived from the hydrolysis of newly formed triglyceride stores and plays a role in very low-density lipoprotein assembly. Displays serine esterase activity in liver. Deacetylates a variety of arylacetamide substrates, including xenobiotic compounds and procarcinogens, converting them to the primary arylamide compounds and increasing their toxicity. The chain is Arylacetamide deacetylase (AADAC) from Bos taurus (Bovine).